The primary structure comprises 556 residues: Urocanate hydratase (556 aa).

Residues 52 to 53, Gln-130, 176 to 178, Glu-196, Arg-201, 242 to 243, 263 to 267, 273 to 274, and Tyr-322 each bind NAD(+); these read GG, GMG, NA, QTSAH, and YL. The active site involves Cys-410. Gly-492 is an NAD(+) binding site.

The protein belongs to the urocanase family. The cofactor is NAD(+).

The protein localises to the cytoplasm. The catalysed reaction is 4-imidazolone-5-propanoate = trans-urocanate + H2O. The protein operates within amino-acid degradation; L-histidine degradation into L-glutamate; N-formimidoyl-L-glutamate from L-histidine: step 2/3. Functionally, catalyzes the conversion of urocanate to 4-imidazolone-5-propionate. This Shewanella piezotolerans (strain WP3 / JCM 13877) protein is Urocanate hydratase.